An 890-amino-acid polypeptide reads, in one-letter code: Alanine--tRNA ligase (890 aa).

Positions 572, 576, 674, and 678 each coordinate Zn(2+).

It belongs to the class-II aminoacyl-tRNA synthetase family. Zn(2+) serves as cofactor.

Its subcellular location is the cytoplasm. The enzyme catalyses tRNA(Ala) + L-alanine + ATP = L-alanyl-tRNA(Ala) + AMP + diphosphate. Functionally, catalyzes the attachment of alanine to tRNA(Ala) in a two-step reaction: alanine is first activated by ATP to form Ala-AMP and then transferred to the acceptor end of tRNA(Ala). Also edits incorrectly charged Ser-tRNA(Ala) and Gly-tRNA(Ala) via its editing domain. This chain is Alanine--tRNA ligase, found in Prochlorococcus marinus (strain MIT 9211).